We begin with the raw amino-acid sequence, 362 residues long: Peptide chain release factor 1 (362 aa).

The residue at position 237 (glutamine 237) is an N5-methylglutamine. Over residues 284–295 (EEEKRQAEETST) the composition is skewed to basic and acidic residues. Residues 284-304 (EEEKRQAEETSTRRNLVASGD) are disordered.

The protein belongs to the prokaryotic/mitochondrial release factor family. Post-translationally, methylated by PrmC. Methylation increases the termination efficiency of RF1.

The protein localises to the cytoplasm. In terms of biological role, peptide chain release factor 1 directs the termination of translation in response to the peptide chain termination codons UAG and UAA. This Pseudoalteromonas atlantica (strain T6c / ATCC BAA-1087) protein is Peptide chain release factor 1.